A 497-amino-acid chain; its full sequence is 3-octaprenyl-4-hydroxybenzoate carboxy-lyase (497 aa).

Asn-175 lines the Mn(2+) pocket. Residues 178–180 (IYR), 192–194 (RWL), and 197–198 (RG) contribute to the prenylated FMN site. Glu-241 is a binding site for Mn(2+). The Proton donor role is filled by Asp-290.

The protein belongs to the UbiD family. As to quaternary structure, homohexamer. It depends on prenylated FMN as a cofactor. Mn(2+) is required as a cofactor.

It is found in the cell membrane. The catalysed reaction is a 4-hydroxy-3-(all-trans-polyprenyl)benzoate + H(+) = a 2-(all-trans-polyprenyl)phenol + CO2. Its pathway is cofactor biosynthesis; ubiquinone biosynthesis. In terms of biological role, catalyzes the decarboxylation of 3-octaprenyl-4-hydroxy benzoate to 2-octaprenylphenol, an intermediate step in ubiquinone biosynthesis. The polypeptide is 3-octaprenyl-4-hydroxybenzoate carboxy-lyase (Shigella boydii serotype 4 (strain Sb227)).